Reading from the N-terminus, the 323-residue chain is Cytochrome c biogenesis protein CcsA (323 aa).

8 helical membrane-spanning segments follow: residues 18–38 (VSVV…VGLY), 43–63 (KGML…WVYW), 71–91 (LYES…IPSF), 99–119 (LNVI…SGLL), 146–166 (LGYA…IIIF), 227–247 (VISL…VWAN), 256–276 (WDPK…YLHI), and 288–308 (AIVA…VNLL).

It belongs to the CcmF/CycK/Ccl1/NrfE/CcsA family. In terms of assembly, may interact with Ccs1.

The protein resides in the plastid. Its subcellular location is the chloroplast thylakoid membrane. Its function is as follows. Required during biogenesis of c-type cytochromes (cytochrome c6 and cytochrome f) at the step of heme attachment. The polypeptide is Cytochrome c biogenesis protein CcsA (Spinacia oleracea (Spinach)).